Reading from the N-terminus, the 390-residue chain is Transaldolase (390 aa).

Residue Lys135 is the Schiff-base intermediate with substrate of the active site. EF-hand domains follow at residues 329–364 (AFCH…FDAL) and 365–388 (DHDH…LALT). Positions 342, 344, 346, 348, 353, 365, 367, 369, 371, and 376 each coordinate Ca(2+).

Belongs to the transaldolase family. Type 1 subfamily.

Its subcellular location is the cytoplasm. The enzyme catalyses D-sedoheptulose 7-phosphate + D-glyceraldehyde 3-phosphate = D-erythrose 4-phosphate + beta-D-fructose 6-phosphate. It participates in carbohydrate degradation; pentose phosphate pathway; D-glyceraldehyde 3-phosphate and beta-D-fructose 6-phosphate from D-ribose 5-phosphate and D-xylulose 5-phosphate (non-oxidative stage): step 2/3. Transaldolase is important for the balance of metabolites in the pentose-phosphate pathway. The protein is Transaldolase of Prochlorococcus marinus (strain MIT 9313).